Reading from the N-terminus, the 782-residue chain is General transcription and DNA repair factor IIH helicase/translocase subunit XPB (782 aa).

Residues 1 to 11 (MGKRDRADRDK) show a composition bias toward basic and acidic residues. Disordered regions lie at residues 1 to 51 (MGKR…ESGT) and 218 to 241 (SAIS…PQGK). The Nuclear localization signal signature appears at 6–18 (RADRDKKKSRKRH). The segment covering 21 to 30 (DEEDDEEDAP) has biased composition (acidic residues). Residues 218 to 236 (SAISKTAESSGGPSTSRVT) show a composition bias toward polar residues. A Helicase ATP-binding domain is found at 327–488 (MFGNGRARSG…DLNFLIGPKL (162 aa)). Residue 340-347 (LPCGAGKS) coordinates ATP. The short motif at 441 to 444 (DEVH) is the DEVH box element. The region spanning 542-702 (RACQFLIKFH…LAGMEEEDLA (161 aa)) is the Helicase C-terminal domain. The ATP site is built by R642 and R645. The residue at position 686 (S686) is a Phosphoserine. A Phosphoserine; by CK2 modification is found at S751.

This sequence belongs to the helicase family. RAD25/XPB subfamily. In terms of assembly, component of the 7-subunit TFIIH core complex composed of XPB/ERCC3, XPD/ERCC2, GTF2H1, GTF2H2, GTF2H3, GTF2H4 and GTF2H5, which is active in NER. The core complex associates with the 3-subunit CDK-activating kinase (CAK) module composed of CCNH/cyclin H, CDK7 and MNAT1 to form the 10-subunit holoenzyme (holo-TFIIH) active in transcription. Interacts with PUF60. Interacts with ATF7IP. Interacts with KAT2A; leading to KAT2A recruitment to promoters and acetylation of histones. Part of TBP-based Pol II pre-initiation complex (PIC), in which Pol II core assembles with general transcription factors and other specific initiation factors including GTF2E1, GTF2E2, GTF2F1, GTF2F2, TCEA1, ERCC2, ERCC3, GTF2H2, GTF2H3, GTF2H4, GTF2H5, GTF2A1, GTF2A2, GTF2B and TBP; this large multi-subunit PIC complex mediates DNA unwinding and targets Pol II core to the transcription start site where the first phosphodiester bond forms. As to quaternary structure, (Microbial infection) Interacts with Epstein-Barr virus EBNA2. In terms of processing, phosphorylation on Ser-751 by CK2 controls the 5'-excision activity of ERCC1-XPF endonuclease; phosphorylated protein inhibits the excision activity and thus NER. Dephosphorylation reactivates the 5'-excision step. Phosphorylation has no effect on transcription or the 3'-5' helicase activity.

The protein localises to the nucleus. It catalyses the reaction Couples ATP hydrolysis with the unwinding of duplex DNA by translocating in the 3'-5' direction.. The enzyme catalyses ATP + H2O = ADP + phosphate + H(+). With respect to regulation, phosphorylation on Ser-751 by CK2 controls the 5'-excision activity of ERCC1-XPF endonuclease; phosphorylated protein inhibits the excision activity and thus NER. ATPase activity is stimulated by TFIIH subunit p52 (GTF2H4). DNA translocase activity by this subunit in TFIIH is stimulated by XPA, ERCC5/XPG and XFP plus ERCC1; translocase activity is sensitive to triptolide which targets this enzyme. Functionally, ATP-dependent 3'-5' DNA helicase/translocase. Binds dsDNA rather than ssDNA, unzipping it in a translocase rather than classical helicase activity. Component of the general transcription and DNA repair factor IIH (TFIIH) core complex. When complexed to CDK-activating kinase (CAK), involved in RNA transcription by RNA polymerase II. The ATPase activity of XPB/ERCC3, but not its helicase activity, is required for DNA opening; it may wrap around the damaged DNA wedging it open, causing localized melting that allows XPD/ERCC2 helicase to anchor. In transcription, TFIIH has an essential role in transcription initiation. When the pre-initiation complex (PIC) has been established, TFIIH is required for promoter opening and promoter escape. The ATP-dependent helicase activity of XPB/ERCC3 is required for promoter opening and promoter escape. In transcription pre-initiation complexes induces and propagates a DNA twist to open DNA. Also involved in transcription-coupled nucleotide excision repair (NER) of damaged DNA. In NER, TFIIH acts by opening DNA around the lesion to allow the excision of the damaged oligonucleotide and its replacement by a new DNA fragment. The structure of the TFIIH transcription complex differs from the NER-TFIIH complex; large movements by XPD/ERCC2 and XPB/ERCC3 are stabilized by XPA. XPA retains XPB/ERCC3 at the 5' end of a DNA bubble (mimicking DNA damage). This chain is General transcription and DNA repair factor IIH helicase/translocase subunit XPB, found in Homo sapiens (Human).